The primary structure comprises 297 residues: Cell division protein FtsQ (297 aa).

Residues 1-33 (MRPLSFRRRTAQARPDPAPSRLSYRVQRLLLTP) lie on the Cytoplasmic side of the membrane. The helical transmembrane segment at 34 to 54 (LFHALIRVGLPAFVLAFGVGW) threads the bilayer. The Periplasmic portion of the chain corresponds to 55 to 297 (LLQNQELRDE…IRGLTNDRIE (243 aa)). A POTRA domain is found at 82–150 (FMVNAMSVSG…GILAIEIVER (69 aa)).

Belongs to the FtsQ/DivIB family. FtsQ subfamily.

Its subcellular location is the cell inner membrane. In terms of biological role, essential cell division protein. The sequence is that of Cell division protein FtsQ from Dinoroseobacter shibae (strain DSM 16493 / NCIMB 14021 / DFL 12).